Here is a 496-residue protein sequence, read N- to C-terminus: MQWETVIGLEVHAQLSTESKIFSGASTAFGAAPNAEACAVDLALPGVLPVLNRGAVERAIRFGLAVGAKINSPSIFARKNYFYPDLPKGYQISQYELPVVEGGHIQLQVVQDGKEQEKTVRLVRAHLEEDAGKSLHEDFHGMSGIDLNRAGTPLLEIVSEPDMRSSAEAVAYAKTLHTLVRWIGICDGNMQEGSFRCDANVSVRPRGSDKLGTRCEIKNLNSFRFLEKAIDYEVRRQVEILEDGGSIQQQTRLFDPEKGETRAMRSKEDAQDYRYFPDPDLLPLEISGNWIEEVKKGLPELPQQIRTRFEHDYGLSMYDALLLTGDRDISEYYEAVVGKLPSDPKLCANWVMGEVSAYLNNEGKSFDVCPLSPAQLAQLLLRIKDGTISGKIAKDVFRQMWAQAGTESISWRNSEGVDEGLADRIIDSQGLRQISDSSALENLVHEVLAANPKSVEEFKAGKEKAFNALMGQVMKAARGKANPAQVNEILRKKLTE.

The protein belongs to the GatB/GatE family. GatB subfamily. As to quaternary structure, heterotrimer of A, B and C subunits.

It catalyses the reaction L-glutamyl-tRNA(Gln) + L-glutamine + ATP + H2O = L-glutaminyl-tRNA(Gln) + L-glutamate + ADP + phosphate + H(+). It carries out the reaction L-aspartyl-tRNA(Asn) + L-glutamine + ATP + H2O = L-asparaginyl-tRNA(Asn) + L-glutamate + ADP + phosphate + 2 H(+). Allows the formation of correctly charged Asn-tRNA(Asn) or Gln-tRNA(Gln) through the transamidation of misacylated Asp-tRNA(Asn) or Glu-tRNA(Gln) in organisms which lack either or both of asparaginyl-tRNA or glutaminyl-tRNA synthetases. The reaction takes place in the presence of glutamine and ATP through an activated phospho-Asp-tRNA(Asn) or phospho-Glu-tRNA(Gln). In Nitrosospira multiformis (strain ATCC 25196 / NCIMB 11849 / C 71), this protein is Aspartyl/glutamyl-tRNA(Asn/Gln) amidotransferase subunit B.